A 543-amino-acid chain; its full sequence is Zinc finger protein 280B (543 aa).

M1 bears the N-acetylmethionine mark. Residues 1 to 10 are compositionally biased toward acidic residues; sequence MEQSCEEEKE. The tract at residues 1-23 is disordered; sequence MEQSCEEEKEPEPQKNIQETKQV. Residues S68 and S70 each carry the phosphoserine modification. Residues 105-138 are disordered; it reads SQLESRSTDSPIIIEPLSKPDYRNSSPQVVPNNS. Low complexity predominate over residues 128–138; it reads NSSPQVVPNNS. Residues K173, K247, and K261 each participate in a glycyl lysine isopeptide (Lys-Gly) (interchain with G-Cter in SUMO2) cross-link. C2H2-type zinc fingers lie at residues 343 to 366, 373 to 396, 432 to 454, and 460 to 483; these read TTCQ…ENVH, TVCK…KDHH, LLCP…YRGH, and HQCS…TQCH. A disordered region spans residues 518 to 543; sequence ASITVSTSDSEPSLPRSKSKISKKSH. Residues 534-543 are compositionally biased toward basic residues; it reads SKSKISKKSH.

Its subcellular location is the nucleus. Functionally, may function as a transcription factor. This is Zinc finger protein 280B (ZNF280B) from Homo sapiens (Human).